A 168-amino-acid chain; its full sequence is RNA pyrophosphohydrolase (168 aa).

The region spanning 8–160 (PYRPCVGLAI…KRQVYERVAR (153 aa)) is the Nudix hydrolase domain. Residues 47–68 (GGIDKGEEPYEAALRELYEETS) carry the Nudix box motif.

It belongs to the Nudix hydrolase family. RppH subfamily. A divalent metal cation is required as a cofactor.

Its function is as follows. Accelerates the degradation of transcripts by removing pyrophosphate from the 5'-end of triphosphorylated RNA, leading to a more labile monophosphorylated state that can stimulate subsequent ribonuclease cleavage. This Azorhizobium caulinodans (strain ATCC 43989 / DSM 5975 / JCM 20966 / LMG 6465 / NBRC 14845 / NCIMB 13405 / ORS 571) protein is RNA pyrophosphohydrolase.